The primary structure comprises 137 residues: Ribosome-binding factor A (137 aa).

The protein belongs to the RbfA family. As to quaternary structure, monomer. Binds 30S ribosomal subunits, but not 50S ribosomal subunits or 70S ribosomes.

It localises to the cytoplasm. Functionally, one of several proteins that assist in the late maturation steps of the functional core of the 30S ribosomal subunit. Associates with free 30S ribosomal subunits (but not with 30S subunits that are part of 70S ribosomes or polysomes). Required for efficient processing of 16S rRNA. May interact with the 5'-terminal helix region of 16S rRNA. The protein is Ribosome-binding factor A of Trichodesmium erythraeum (strain IMS101).